The primary structure comprises 581 residues: 2-succinyl-5-enolpyruvyl-6-hydroxy-3-cyclohexene-1-carboxylate synthase (581 aa).

The protein belongs to the TPP enzyme family. MenD subfamily. Homodimer. The cofactor is Mg(2+). It depends on Mn(2+) as a cofactor. Requires thiamine diphosphate as cofactor.

It carries out the reaction isochorismate + 2-oxoglutarate + H(+) = 5-enolpyruvoyl-6-hydroxy-2-succinyl-cyclohex-3-ene-1-carboxylate + CO2. It participates in quinol/quinone metabolism; 1,4-dihydroxy-2-naphthoate biosynthesis; 1,4-dihydroxy-2-naphthoate from chorismate: step 2/7. It functions in the pathway cofactor biosynthesis; phylloquinone biosynthesis. Functionally, catalyzes the thiamine diphosphate-dependent decarboxylation of 2-oxoglutarate and the subsequent addition of the resulting succinic semialdehyde-thiamine pyrophosphate anion to isochorismate to yield 2-succinyl-5-enolpyruvyl-6-hydroxy-3-cyclohexene-1-carboxylate (SEPHCHC). This Gloeothece citriformis (strain PCC 7424) (Cyanothece sp. (strain PCC 7424)) protein is 2-succinyl-5-enolpyruvyl-6-hydroxy-3-cyclohexene-1-carboxylate synthase.